The following is a 613-amino-acid chain: DBH-like monooxygenase protein 1 (613 aa).

The first 19 residues, 1–19 (MCCWPLLLLWGLLPGTAAG), serve as a signal peptide directing secretion. Topologically, residues 20 to 592 (GSGRTYPHRT…TSSSSSLHRD (573 aa)) are lumenal. The 114-residue stretch at 35-148 (GKYWLGWSQR…STVRVIWAYH (114 aa)) folds into the DOMON domain. N-linked (GlcNAc...) asparagine glycosylation is present at Asn-114. The active site involves Tyr-203. 2 disulfide bridges follow: Cys-205–Cys-257 and Cys-242–Cys-269. Residues His-235 and His-236 each coordinate Cu cation. Asn-247 is a glycosylation site (N-linked (GlcNAc...) asparagine). Residues His-307, His-389, His-391, and Met-464 each coordinate Cu cation. Intrachain disulfides connect Cys-364/Cys-480, Cys-368/Cys-550, and Cys-443/Cys-465. His-389 is a catalytic residue. N-linked (GlcNAc...) asparagine glycans are attached at residues Asn-476 and Asn-517. The chain crosses the membrane as a helical span at residues 593–613 (FSINLLVCLLLLSCTLSTKSL).

The protein belongs to the copper type II ascorbate-dependent monooxygenase family. Cu(2+) is required as a cofactor. N-glycosylated. In terms of tissue distribution, highly expressed in lung, kidney, brain and spinal cord.

The protein resides in the endoplasmic reticulum membrane. The chain is DBH-like monooxygenase protein 1 (MOXD1) from Homo sapiens (Human).